A 382-amino-acid polypeptide reads, in one-letter code: Lactosylceramide 1,3-N-acetyl-beta-D-glucosaminyltransferase B (382 aa).

At 1 to 13 (MAVLKMPRFKKYH) the chain is on the cytoplasmic side. A helical; Signal-anchor for type II membrane protein membrane pass occupies residues 14-30 (LRLMITCFSTLLLMTYW). Topologically, residues 31 to 382 (EKIDNCVVTH…CKAAFFEEDT (352 aa)) are lumenal. N-linked (GlcNAc...) asparagine glycosylation is found at asparagine 57, asparagine 112, asparagine 167, and asparagine 276.

Belongs to the glycosyltransferase 31 family.

Its subcellular location is the golgi apparatus membrane. The enzyme catalyses a beta-D-Gal-(1-&gt;4)-beta-D-Glc-(1&lt;-&gt;1)-Cer(d18:1(4E)) + UDP-N-acetyl-alpha-D-glucosamine = a beta-D-GlcNAc-(1-&gt;3)-beta-D-Gal-(1-&gt;4)-beta-D-Glc-(1&lt;-&gt;1)-Cer(d18:1(4E)) + UDP + H(+). It catalyses the reaction a neolactoside nLc4Cer(d18:1(4E)) + UDP-N-acetyl-alpha-D-glucosamine = a neolactoside IV(3)-beta-GlcNAc-nLc4Cer(d18:1(4E)) + UDP + H(+). Its pathway is protein modification; protein glycosylation. Its function is as follows. Beta-1,3-N-acetylglucosaminyltransferase that plays a key role in the synthesis of lacto- or neolacto-series carbohydrate chains on glycolipids. In Danio rerio (Zebrafish), this protein is Lactosylceramide 1,3-N-acetyl-beta-D-glucosaminyltransferase B (b3gnt5b).